The chain runs to 92 residues: Defensin-like protein 294 (92 aa).

The signal sequence occupies residues 1–26 (MASRATSLFIFFFLISCTFMLLETNA). Disulfide bonds link cysteine 63–cysteine 82, cysteine 69–cysteine 87, and cysteine 75–cysteine 89.

Belongs to the DEFL family.

It localises to the secreted. This is Defensin-like protein 294 from Arabidopsis thaliana (Mouse-ear cress).